The following is a 428-amino-acid chain: Histidinol dehydrogenase (428 aa).

3 residues coordinate NAD(+): Tyr125, Gln187, and Asn210. Positions 234, 256, and 259 each coordinate substrate. Zn(2+) contacts are provided by Gln256 and His259. Catalysis depends on proton acceptor residues Glu323 and His324. Substrate is bound by residues His324, Asp357, Glu411, and His416. Residue Asp357 participates in Zn(2+) binding. Zn(2+) is bound at residue His416.

It belongs to the histidinol dehydrogenase family. Zn(2+) is required as a cofactor.

The catalysed reaction is L-histidinol + 2 NAD(+) + H2O = L-histidine + 2 NADH + 3 H(+). It participates in amino-acid biosynthesis; L-histidine biosynthesis; L-histidine from 5-phospho-alpha-D-ribose 1-diphosphate: step 9/9. In terms of biological role, catalyzes the sequential NAD-dependent oxidations of L-histidinol to L-histidinaldehyde and then to L-histidine. The protein is Histidinol dehydrogenase of Bacteroides thetaiotaomicron (strain ATCC 29148 / DSM 2079 / JCM 5827 / CCUG 10774 / NCTC 10582 / VPI-5482 / E50).